We begin with the raw amino-acid sequence, 240 residues long: Small ribosomal subunit protein uS3 (240 aa).

One can recognise a KH type-2 domain in the interval 39–108; sequence LRKFLKKKLY…ELILNIKEER (70 aa). Basic and acidic residues predominate over residues 213 to 224; sequence MNSDDTATPERK. Residues 213–240 are disordered; the sequence is MNSDDTATPERKAPRRRKGRRNVNAKKN. The span at 225–240 shows a compositional bias: basic residues; it reads APRRRKGRRNVNAKKN.

The protein belongs to the universal ribosomal protein uS3 family. In terms of assembly, part of the 30S ribosomal subunit. Forms a tight complex with proteins S10 and S14.

Functionally, binds the lower part of the 30S subunit head. Binds mRNA in the 70S ribosome, positioning it for translation. The chain is Small ribosomal subunit protein uS3 from Nautilia profundicola (strain ATCC BAA-1463 / DSM 18972 / AmH).